The chain runs to 360 residues: 3-isopropylmalate dehydrogenase (360 aa).

The span at 66–75 (RCHPARRRRR) shows a compositional bias: basic residues. The tract at residues 66-101 (RCHPARRRRRSEMGRHRPGHPPGARPAENPFATGPV) is disordered. Substrate-binding residues include arginine 133 and aspartate 223. Mg(2+) contacts are provided by aspartate 223, aspartate 247, and aspartate 251.

Belongs to the isocitrate and isopropylmalate dehydrogenases family. LeuB type 1 subfamily. Homodimer. Mg(2+) is required as a cofactor. The cofactor is Mn(2+).

It localises to the cytoplasm. It catalyses the reaction (2R,3S)-3-isopropylmalate + NAD(+) = 4-methyl-2-oxopentanoate + CO2 + NADH. Its pathway is amino-acid biosynthesis; L-leucine biosynthesis; L-leucine from 3-methyl-2-oxobutanoate: step 3/4. Catalyzes the oxidation of 3-carboxy-2-hydroxy-4-methylpentanoate (3-isopropylmalate) to 3-carboxy-4-methyl-2-oxopentanoate. The product decarboxylates to 4-methyl-2 oxopentanoate. This is 3-isopropylmalate dehydrogenase (leuB) from Azotobacter vinelandii.